Here is a 655-residue protein sequence, read N- to C-terminus: MPIETEPNRTRKNFEPKRFGGSLFILFTLLLFLNLFVLRGPRFPITAYSDFITQVEAGQVERVEVRPDRIRYILKSDQYGFNEGTETAAVFDTVPVGIDLELPKFLREHDVQYFAPPPSSLSWLPTLLGWVVPPLIFFGIWSWLINRNQGAGPAALTVGQSKARIYSEGSTGVTFDDVAGVEEAKTELLEIVDFLAHADKYTRLGAKIPKGVLLVGPPGTGKTLLAKAIAGEAKVPFFSISGSEFIELFVGIGAARVRDLFEQAKQQAPCIVFIDELDALGKARGGPGGFTGGNDEREQTLNQLLSEMDGFDPNVGVILLAATNRPEVLDPALLRPGRFDRQIVVDRPDKMGREAILKVHVRGVKLAEDINLTKLAVRTPGFSGADLANLVNEAALLAARQSRDAVVMSDFNEAIERVVAGLEKKSRVLNDLEKKTVAYHEVGHAIVGSLMPGAGTVEKISVIPRGIGALGYTLQLPEEDRFLITASELRGRIATLLGGRSAEELIFGVVSTGASDDIQKATDLAERYVTLYGMSDELGPIAYEKAQQQFLEGVPNPRRTVGPQVVEAIDQAVKDVVDGAHHMALSILSINQDMLQLTASHLLEKEVLESQELHSLLSQPQFPPDMDEWLQTGKLPQGKELIQTTLNSHQLIGIN.

Over 1-17 (MPIETEPNRTRKNFEPK) the chain is Cytoplasmic. The helical transmembrane segment at 18–38 (RFGGSLFILFTLLLFLNLFVL) threads the bilayer. The Lumenal portion of the chain corresponds to 39–124 (RGPRFPITAY…APPPSSLSWL (86 aa)). A helical membrane pass occupies residues 125-145 (PTLLGWVVPPLIFFGIWSWLI). Residues 146-655 (NRNQGAGPAA…LNSHQLIGIN (510 aa)) lie on the Cytoplasmic side of the membrane. Residue 216-223 (GPPGTGKT) coordinates ATP. Residue histidine 440 coordinates Zn(2+). Glutamate 441 is a catalytic residue. The Zn(2+) site is built by histidine 444 and aspartate 517.

It in the central section; belongs to the AAA ATPase family. This sequence in the C-terminal section; belongs to the peptidase M41 family. In terms of assembly, homohexamer. Zn(2+) is required as a cofactor.

The protein localises to the cellular thylakoid membrane. In terms of biological role, acts as a processive, ATP-dependent zinc metallopeptidase for both cytoplasmic and membrane proteins. Plays a role in the quality control of integral membrane proteins. The protein is ATP-dependent zinc metalloprotease FtsH of Acaryochloris marina (strain MBIC 11017).